We begin with the raw amino-acid sequence, 226 residues long: 7-cyano-7-deazaguanine synthase (226 aa).

ATP is bound at residue 8–18 (ISGGLDSTTCL). Zn(2+)-binding residues include Cys188, Cys198, Cys201, and Cys204.

The protein belongs to the QueC family. Zn(2+) serves as cofactor.

It carries out the reaction 7-carboxy-7-deazaguanine + NH4(+) + ATP = 7-cyano-7-deazaguanine + ADP + phosphate + H2O + H(+). Its pathway is purine metabolism; 7-cyano-7-deazaguanine biosynthesis. In terms of biological role, catalyzes the ATP-dependent conversion of 7-carboxy-7-deazaguanine (CDG) to 7-cyano-7-deazaguanine (preQ(0)). The chain is 7-cyano-7-deazaguanine synthase from Coxiella burnetii (strain Dugway 5J108-111).